The following is a 427-amino-acid chain: Serine--tRNA ligase (427 aa).

Residue 231-233 (TAE) participates in L-serine binding. 262 to 264 (RSE) is an ATP binding site. Position 285 (glutamate 285) interacts with L-serine. Residue 349–352 (EISS) coordinates ATP. Serine 385 provides a ligand contact to L-serine.

This sequence belongs to the class-II aminoacyl-tRNA synthetase family. Type-1 seryl-tRNA synthetase subfamily. In terms of assembly, homodimer. The tRNA molecule binds across the dimer.

It localises to the cytoplasm. The catalysed reaction is tRNA(Ser) + L-serine + ATP = L-seryl-tRNA(Ser) + AMP + diphosphate + H(+). It carries out the reaction tRNA(Sec) + L-serine + ATP = L-seryl-tRNA(Sec) + AMP + diphosphate + H(+). It participates in aminoacyl-tRNA biosynthesis; selenocysteinyl-tRNA(Sec) biosynthesis; L-seryl-tRNA(Sec) from L-serine and tRNA(Sec): step 1/1. Functionally, catalyzes the attachment of serine to tRNA(Ser). Is also able to aminoacylate tRNA(Sec) with serine, to form the misacylated tRNA L-seryl-tRNA(Sec), which will be further converted into selenocysteinyl-tRNA(Sec). The protein is Serine--tRNA ligase of Brucella canis (strain ATCC 23365 / NCTC 10854 / RM-666).